The primary structure comprises 534 residues: uncharacterized protein (534 aa).

Disordered stretches follow at residues 1 to 150, 252 to 284, and 383 to 434; these read MSDS…DIPP, RRFR…NGQP, and WKSQ…PSLP. The span at 8 to 67 shows a compositional bias: basic and acidic residues; the sequence is SQREDNYSRDRRSRFTEDSYSRRDSQRSGNEAPRESRYYRKEEHLQERSRSRSPARDSRW. Positions 102–113 are enriched in polar residues; sequence SLQSTKATSSRT. Residues 130 to 141 show a composition bias toward pro residues; sequence PSAPAPPLPPSS. Residues 252–262 are compositionally biased toward basic and acidic residues; it reads RRFRRREDNER. Residues 263 to 272 show a composition bias toward low complexity; the sequence is NNSNSPRNFS. Over residues 393 to 408 the composition is skewed to polar residues; that stretch reads NQGNRAYNPPNRNQAF.

This is an uncharacterized protein from Schizosaccharomyces pombe (strain 972 / ATCC 24843) (Fission yeast).